Consider the following 1118-residue polypeptide: Cytospin-A (1118 aa).

2 disordered regions span residues 1 to 157 (MKKS…DGQI) and 198 to 221 (GGKE…PHVS). Composition is skewed to polar residues over residues 57 to 102 (NPTS…TKET) and 112 to 123 (SRASANKKQSAA). Residues 144 to 153 (SESRMSKSKS) show a composition bias toward basic and acidic residues. The span at 204-215 (EGPEEEEEEEEE) shows a compositional bias: acidic residues. Positions 225–264 (AADVESTLILLQEQNQAIREELNLLKSENRMLKDRLNALG) form a coiled coil. The interval 289 to 379 (AGSGQSDGGG…RRGSSGNASE (91 aa)) is disordered. The span at 343–363 (SSDDALDAPSGASSSSESECA) shows a compositional bias: low complexity. Coiled-coil stretches lie at residues 384–438 (CLTE…MDSL) and 475–796 (GRYM…RGRV). 3 disordered regions span residues 771 to 790 (QEKN…RKQD), 837 to 876 (FDSA…PPAA), and 920 to 1001 (SAAS…ERKD). Over residues 838–855 (DSASQGPPSNGASVTPTV) the composition is skewed to polar residues. The segment covering 861 to 872 (PRTPLSPSPMKT) has biased composition (pro residues). The segment covering 930–945 (QRVSNMDSTKTISVSR) has biased composition (polar residues). A compositionally biased stretch (basic and acidic residues) spans 946–956 (RSSEEMKRDMS). Residues 961–986 (ASSTSLMAMSAASAPLSLSSSSPTAS) are compositionally biased toward low complexity. Positions 1012–1117 (GSKRNALLKW…YVTAIYKYFE (106 aa)) constitute a Calponin-homology (CH) domain.

This sequence belongs to the cytospin-A family. May interact with both microtubules and actin cytoskeleton.

It localises to the cytoplasm. The protein resides in the cytoskeleton. The protein localises to the spindle. Its subcellular location is the cell junction. It is found in the gap junction. Functionally, involved in cytokinesis and spindle organization. May play a role in actin cytoskeleton organization and microtubule stabilization and hence required for proper cell adhesion and migration. This chain is Cytospin-A (specc1l), found in Takifugu rubripes (Japanese pufferfish).